Here is a 192-residue protein sequence, read N- to C-terminus: E3 ubiquitin-protein ligase RNF185 (192 aa).

The segment covering 1–13 has biased composition (polar residues); sequence MASKGPSASASTE. The tract at residues 1 to 30 is disordered; the sequence is MASKGPSASASTENSNAGGPSGSSNGTGES. At 1–130 the chain is on the cytoplasmic side; it reads MASKGPSASA…GGFQGFGFGD (130 aa). Positions 14–27 are enriched in low complexity; the sequence is NSNAGGPSGSSNGT. Positions 29–80 are required for ubiquitin ligase activity and protection against ER stress-induced cell death; it reads ESGGQDSTFECNICLDTAKDAVISLCGHLFCWPCLHQWLETRPNRQVCPVCK. An RING-type zinc finger spans residues 39–80; that stretch reads CNICLDTAKDAVISLCGHLFCWPCLHQWLETRPNRQVCPVCK. The tract at residues 90–123 is disordered; sequence PLYGRGSTGQQDPREKTPPRPQGQRPEPENRGGF. Residues 131-151 form a helical membrane-spanning segment; sequence GGFQMSFGIGAFPFGIFATAF. At 152-171 the chain is on the mitochondrial intermembrane side; it reads NINDGRPPPAVPGTPQYVDE. The helical transmembrane segment at 172–192 threads the bilayer; sequence QFLSRLFLFVALVIMFWLLIA.

Interacts with ATG5 and BNIP1. In terms of tissue distribution, ubiquitously expressed with high expression in testis.

The protein localises to the mitochondrion outer membrane. It is found in the endoplasmic reticulum membrane. The catalysed reaction is S-ubiquitinyl-[E2 ubiquitin-conjugating enzyme]-L-cysteine + [acceptor protein]-L-lysine = [E2 ubiquitin-conjugating enzyme]-L-cysteine + N(6)-ubiquitinyl-[acceptor protein]-L-lysine.. Its pathway is protein modification; protein ubiquitination. Its function is as follows. E3 ubiquitin-protein ligase that regulates selective mitochondrial autophagy by mediating 'Lys-63'-linked polyubiquitination of BNIP1. Acts in the endoplasmic reticulum (ER)-associated degradation (ERAD) pathway, which targets misfolded proteins that accumulate in the endoplasmic reticulum (ER) for ubiquitination and subsequent proteasome-mediated degradation. Protects cells from ER stress-induced apoptosis. Responsible for the cotranslational ubiquitination and degradation of CFTR in the ERAD pathway. Also acts as a regulator of the innate antiviral response by catalyzing 'Lys-27'-linked polyubiquitination of CGAS, thereby promoting CGAS cyclic GMP-AMP synthase activity. Preferentially associates with the E2 enzymes UBE2J1 and UBE2J2. In Mus musculus (Mouse), this protein is E3 ubiquitin-protein ligase RNF185 (Rnf185).